The primary structure comprises 115 residues: U17-barytoxin-Tl1b (115 aa).

The N-terminal stretch at 1–20 is a signal peptide; it reads MKTIIVFLSLLVLATKFGDA. The propeptide occupies 21 to 74; sequence KEGVNQKQKKEVTQNEFREEYLNEMAAMSLVQQLEAIERALFENEAGRNSRQKR. Cystine bridges form between Cys-75–Cys-89, Cys-82–Cys-94, and Cys-88–Cys-109.

The protein belongs to the neurotoxin 14 (magi-1) family. 03 (ICK-30-40) subfamily. In terms of tissue distribution, expressed by the venom gland.

It localises to the secreted. In terms of biological role, ion channel inhibitor. In Trittame loki (Brush-footed trapdoor spider), this protein is U17-barytoxin-Tl1b.